A 330-amino-acid chain; its full sequence is Virulence plasmid integrase pGP8-D (330 aa).

The 86-residue stretch at 39-124 (FSLFEVIMHW…SYISLTRFLN (86 aa)) folds into the Core-binding (CB) domain. Positions 152–327 (VKTDAMNSLQ…SREDNASKKM (176 aa)) constitute a Tyr recombinase domain. Active-site residues include R189, K214, H279, R282, and H305. Y314 functions as the O-(3'-phospho-DNA)-tyrosine intermediate in the catalytic mechanism.

The protein belongs to the 'phage' integrase family.

In Chlamydia trachomatis serovar L2 (strain ATCC VR-902B / DSM 19102 / 434/Bu), this protein is Virulence plasmid integrase pGP8-D.